We begin with the raw amino-acid sequence, 464 residues long: 3-isopropylmalate dehydratase large subunit (464 aa).

3 residues coordinate [4Fe-4S] cluster: cysteine 337, cysteine 397, and cysteine 400.

It belongs to the aconitase/IPM isomerase family. LeuC type 1 subfamily. Heterodimer of LeuC and LeuD. The cofactor is [4Fe-4S] cluster.

It carries out the reaction (2R,3S)-3-isopropylmalate = (2S)-2-isopropylmalate. It participates in amino-acid biosynthesis; L-leucine biosynthesis; L-leucine from 3-methyl-2-oxobutanoate: step 2/4. Its function is as follows. Catalyzes the isomerization between 2-isopropylmalate and 3-isopropylmalate, via the formation of 2-isopropylmaleate. The sequence is that of 3-isopropylmalate dehydratase large subunit from Bacillus anthracis (strain A0248).